A 362-amino-acid polypeptide reads, in one-letter code: S-adenosylmethionine:tRNA ribosyltransferase-isomerase (362 aa).

It belongs to the QueA family. Monomer.

It localises to the cytoplasm. The enzyme catalyses 7-aminomethyl-7-carbaguanosine(34) in tRNA + S-adenosyl-L-methionine = epoxyqueuosine(34) in tRNA + adenine + L-methionine + 2 H(+). The protein operates within tRNA modification; tRNA-queuosine biosynthesis. Its function is as follows. Transfers and isomerizes the ribose moiety from AdoMet to the 7-aminomethyl group of 7-deazaguanine (preQ1-tRNA) to give epoxyqueuosine (oQ-tRNA). The chain is S-adenosylmethionine:tRNA ribosyltransferase-isomerase from Methylobacterium sp. (strain 4-46).